Reading from the N-terminus, the 186-residue chain is Elongation factor P (186 aa).

The protein belongs to the elongation factor P family.

The protein resides in the cytoplasm. It participates in protein biosynthesis; polypeptide chain elongation. Its function is as follows. Involved in peptide bond synthesis. Stimulates efficient translation and peptide-bond synthesis on native or reconstituted 70S ribosomes in vitro. Probably functions indirectly by altering the affinity of the ribosome for aminoacyl-tRNA, thus increasing their reactivity as acceptors for peptidyl transferase. The protein is Elongation factor P of Synechococcus sp. (strain CC9902).